The chain runs to 266 residues: Glucosamine-6-phosphate deaminase (266 aa).

Aspartate 72 serves as the catalytic Proton acceptor; for enolization step. The For ring-opening step role is filled by aspartate 141. Histidine 143 functions as the Proton acceptor; for ring-opening step in the catalytic mechanism. Residue glutamate 148 is the For ring-opening step of the active site.

The protein belongs to the glucosamine/galactosamine-6-phosphate isomerase family. NagB subfamily. Homohexamer.

The catalysed reaction is alpha-D-glucosamine 6-phosphate + H2O = beta-D-fructose 6-phosphate + NH4(+). It functions in the pathway amino-sugar metabolism; N-acetylneuraminate degradation; D-fructose 6-phosphate from N-acetylneuraminate: step 5/5. With respect to regulation, allosterically activated by N-acetylglucosamine 6-phosphate (GlcNAc6P). In terms of biological role, catalyzes the reversible isomerization-deamination of glucosamine 6-phosphate (GlcN6P) to form fructose 6-phosphate (Fru6P) and ammonium ion. This is Glucosamine-6-phosphate deaminase from Klebsiella pneumoniae subsp. pneumoniae (strain ATCC 700721 / MGH 78578).